The chain runs to 105 residues: Malonate decarboxylase acyl carrier protein (105 aa).

S28 bears the O-(phosphoribosyl dephospho-coenzyme A)serine mark.

It belongs to the MdcC family. In terms of processing, covalently binds the prosthetic group of malonate decarboxylase.

Its subcellular location is the cytoplasm. Subunit of malonate decarboxylase, it is an acyl carrier protein to which acetyl and malonyl thioester residues are bound via a 2'-(5''-phosphoribosyl)-3'-dephospho-CoA prosthetic group and turn over during the catalytic mechanism. The chain is Malonate decarboxylase acyl carrier protein from Xanthomonas campestris pv. campestris (strain 8004).